The primary structure comprises 118 residues: Small ribosomal subunit protein uS13 (118 aa).

The tract at residues 91 to 118 (HRRGLPVRGQRTKTNARTRKGPRKPIKK) is disordered.

It belongs to the universal ribosomal protein uS13 family. Part of the 30S ribosomal subunit. Forms a loose heterodimer with protein S19. Forms two bridges to the 50S subunit in the 70S ribosome.

Its function is as follows. Located at the top of the head of the 30S subunit, it contacts several helices of the 16S rRNA. In the 70S ribosome it contacts the 23S rRNA (bridge B1a) and protein L5 of the 50S subunit (bridge B1b), connecting the 2 subunits; these bridges are implicated in subunit movement. Contacts the tRNAs in the A and P-sites. The sequence is that of Small ribosomal subunit protein uS13 from Pectobacterium atrosepticum (strain SCRI 1043 / ATCC BAA-672) (Erwinia carotovora subsp. atroseptica).